Reading from the N-terminus, the 264-residue chain is Apolipoprotein A-I (264 aa).

The first 18 residues, 1-18 (MKAVVLAVAVLFLTGSQA), serve as a signal peptide directing secretion. 2 tandem repeats follow at residues 67–88 (LNLL…EQLG) and 89–110 (HVSQ…EEMN). Residues 67 to 264 (LNLLENWDTL…DQITKHVTTQ (198 aa)) are 10 X approximate tandem repeats. M109 bears the Methionine sulfoxide mark. Residues 111–121 (KDLEKVKKKVQ) form a 3; half-length repeat. A run of 3 repeats spans residues 122–143 (PFLD…HKVE), 144–165 (PLSL…EKLG), and 166–187 (PLGK…SHLR). Residues 188–207 (TYTEEMGQILAERLGAIKES) form a 7; truncated repeat. M193 carries the post-translational modification Methionine sulfoxide. Repeat unit 8 spans residues 208 to 229 (TSLAEYQTKASEHLRTFSKKAK). A 9; half-length repeat occupies 230 to 240 (PILEDLRQGLL). The stretch at 241–264 (PVAENFKTNIKNTFDQITKHVTTQ) is repeat 10.

The protein belongs to the apolipoprotein A1/A4/E family. In terms of assembly, homodimer. Interacts with APOA1BP and CLU. Component of a sperm activating protein complex (SPAP), consisting of APOA1, an immunoglobulin heavy chain, an immunoglobulin light chain and albumin. Interacts with NDRG1. Interacts with SCGB3A2. Interacts with NAXE and YJEFN3. In terms of processing, glycosylated. Palmitoylated. Post-translationally, phosphorylation sites are present in the extracellular medium.

Its subcellular location is the secreted. In terms of biological role, participates in the reverse transport of cholesterol from tissues to the liver for excretion by promoting cholesterol efflux from tissues and by acting as a cofactor for the lecithin cholesterol acyltransferase (LCAT). As part of the SPAP complex, activates spermatozoa motility. The protein is Apolipoprotein A-I (Apoa1) of Fukomys damarensis (Damaraland mole rat).